Here is a 197-residue protein sequence, read N- to C-terminus: Beta-crystallin A2 (197 aa).

Residues 1–11 (MSGTLSQGSSP) are N-terminal arm. Beta/gamma crystallin 'Greek key' domains lie at 12–52 (ARLT…KVES) and 53–99 (GAWV…RPLL). A connecting peptide region spans residues 100–105 (CANHSD). Beta/gamma crystallin 'Greek key' domains are found at residues 106 to 147 (SRVT…KVTS) and 148 to 196 (GAWV…RRVQ).

Belongs to the beta/gamma-crystallin family. As to quaternary structure, homo/heterodimer, or complexes of higher-order. The structure of beta-crystallin oligomers seems to be stabilized through interactions between the N-terminal arms.

Functionally, crystallins are the dominant structural components of the vertebrate eye lens. This chain is Beta-crystallin A2 (CRYBA2), found in Macropus fuliginosus (Western gray kangaroo).